Consider the following 280-residue polypeptide: Phosphatidylglycerol--prolipoprotein diacylglyceryl transferase (280 aa).

A run of 4 helical transmembrane segments spans residues 23 to 43 (LRWYGLMYLVGFAAAFWLAGV), 58 to 78 (LLFWGFLGVILGGRIGYVLFY), 93 to 113 (IWTGGMSFHGGLLGVIAALWW), and 120 to 140 (CTFLQVGDFIAPLVPIGLGAG). Arg-141 lines the a 1,2-diacyl-sn-glycero-3-phospho-(1'-sn-glycerol) pocket. The next 3 helical transmembrane spans lie at 173–193 (PSQLYEFALEGVVLFLILWLY), 200–220 (IGAVSGLFLLGYGSFRFFVEF), and 241–261 (QGQILSAPMIIGGIALMVWAV).

The protein belongs to the Lgt family.

It localises to the cell inner membrane. The enzyme catalyses L-cysteinyl-[prolipoprotein] + a 1,2-diacyl-sn-glycero-3-phospho-(1'-sn-glycerol) = an S-1,2-diacyl-sn-glyceryl-L-cysteinyl-[prolipoprotein] + sn-glycerol 1-phosphate + H(+). The protein operates within protein modification; lipoprotein biosynthesis (diacylglyceryl transfer). Its function is as follows. Catalyzes the transfer of the diacylglyceryl group from phosphatidylglycerol to the sulfhydryl group of the N-terminal cysteine of a prolipoprotein, the first step in the formation of mature lipoproteins. The polypeptide is Phosphatidylglycerol--prolipoprotein diacylglyceryl transferase (Pseudoalteromonas atlantica (strain T6c / ATCC BAA-1087)).